We begin with the raw amino-acid sequence, 176 residues long: MTGCLKIGPGDEAPDVVNVVIEIPMNSSVKYEFDKEACIVKVDRFLYTSMVYPFNYGFIPGTLEEDGDPVDVLVISREPVAPGSLIEAVPVAVLDMEDEEGPDSKVVAVPKAKLDPLFASYKDVGDIPDALKSKIKHFFEHYKELEPGKWVRVTGWRPAADAKEIIRRAIERYKGA.

Residues lysine 30, arginine 44, and tyrosine 56 each contribute to the substrate site. Positions 66, 71, and 103 each coordinate Mg(2+). Tyrosine 142 contributes to the substrate binding site.

The protein belongs to the PPase family. In terms of assembly, homohexamer. It depends on Mg(2+) as a cofactor.

The protein localises to the cytoplasm. It carries out the reaction diphosphate + H2O = 2 phosphate + H(+). Its function is as follows. Catalyzes the hydrolysis of inorganic pyrophosphate (PPi) forming two phosphate ions. The sequence is that of Inorganic pyrophosphatase from Aeropyrum pernix (strain ATCC 700893 / DSM 11879 / JCM 9820 / NBRC 100138 / K1).